Reading from the N-terminus, the 385-residue chain is Methionyl-tRNA formyltransferase, mitochondrial (385 aa).

This sequence belongs to the Fmt family.

Its subcellular location is the mitochondrion. It carries out the reaction L-methionyl-tRNA(fMet) + (6R)-10-formyltetrahydrofolate = N-formyl-L-methionyl-tRNA(fMet) + (6S)-5,6,7,8-tetrahydrofolate + H(+). Methionyl-tRNA formyltransferase that formylates methionyl-tRNA in mitochondria and is crucial for translation initiation. This Rattus norvegicus (Rat) protein is Methionyl-tRNA formyltransferase, mitochondrial (Mtfmt).